Reading from the N-terminus, the 187-residue chain is Elongation factor P (187 aa).

This sequence belongs to the elongation factor P family.

The protein resides in the cytoplasm. It functions in the pathway protein biosynthesis; polypeptide chain elongation. Involved in peptide bond synthesis. Stimulates efficient translation and peptide-bond synthesis on native or reconstituted 70S ribosomes in vitro. Probably functions indirectly by altering the affinity of the ribosome for aminoacyl-tRNA, thus increasing their reactivity as acceptors for peptidyl transferase. This Treponema pallidum (strain Nichols) protein is Elongation factor P (efp).